We begin with the raw amino-acid sequence, 125 residues long: uncharacterized protein (125 aa).

The protein belongs to the asfivirus H124R family.

The protein resides in the virion. This is an uncharacterized protein from Ornithodoros (relapsing fever ticks).